The following is a 196-amino-acid chain: tRNA(Phe) 7-((3-amino-3-carboxypropyl)-4-demethylwyosine(37)-N(4))-methyltransferase 1 (196 aa).

It belongs to the TYW3 family.

It carries out the reaction 4-demethyl-7-[(3S)-3-amino-3-carboxypropyl]wyosine(37) in tRNA(Phe) + S-adenosyl-L-methionine = 7-[(3S)-3-amino-3-carboxypropyl]wyosine(37) in tRNA(Phe) + S-adenosyl-L-homocysteine + H(+). Functionally, S-adenosyl-L-methionine-dependent methyltransferase that acts as a component of the wyosine derivatives biosynthesis pathway. Probably methylates N-4 position of wybutosine-86 to produce wybutosine-72. In Pyrococcus furiosus (strain ATCC 43587 / DSM 3638 / JCM 8422 / Vc1), this protein is tRNA(Phe) 7-((3-amino-3-carboxypropyl)-4-demethylwyosine(37)-N(4))-methyltransferase 1.